A 289-amino-acid polypeptide reads, in one-letter code: Serine/threonine-protein phosphatase Pgam5, mitochondrial (289 aa).

Residues 7–23 traverse the membrane as a helical segment; the sequence is FACGTGAGLAAYYLQKL.

The protein belongs to the phosphoglycerate mutase family. BPG-dependent PGAM subfamily. Interacts with Pk92B/ASK1.

It localises to the mitochondrion outer membrane. It carries out the reaction O-phospho-L-seryl-[protein] + H2O = L-seryl-[protein] + phosphate. It catalyses the reaction O-phospho-L-threonyl-[protein] + H2O = L-threonyl-[protein] + phosphate. In terms of biological role, displays phosphatase activity for serine/threonine residues, and dephosphorylates and activates Pk92B kinase. Has apparently no phosphoglycerate mutase activity. The sequence is that of Serine/threonine-protein phosphatase Pgam5, mitochondrial from Drosophila virilis (Fruit fly).